The primary structure comprises 899 residues: Conserved oligomeric Golgi complex subunit 3 (899 aa).

It belongs to the COG3 family. Component of the conserved oligomeric Golgi complex which is composed of eight different subunits and is required for normal Golgi morphology and localization.

The protein localises to the golgi apparatus membrane. In terms of biological role, involved in ER-Golgi transport. In Aedes aegypti (Yellowfever mosquito), this protein is Conserved oligomeric Golgi complex subunit 3.